The following is a 205-amino-acid chain: Metalloproteinase inhibitor 1 (205 aa).

An N-terminal signal peptide occupies residues 1 to 24 (MMAPFASLASGILLLLSLIASSKA). A Zn(2+)-binding site is contributed by C25. Residues 25–28 (CSCA) are involved in metalloproteinase-binding. Cystine bridges form between C25–C94, C27–C123, C37–C148, C151–C197, C156–C161, and C169–C189. The 124-residue stretch at 25–148 (CSCAPPHPQT…AFSKTYSAGC (124 aa)) folds into the NTR domain. An N-linked (GlcNAc...) asparagine glycan is attached at N54. The segment at 91–92 (ES) is involved in metalloproteinase-binding. Residue N102 is glycosylated (N-linked (GlcNAc...) asparagine). Residue S179 is modified to Phosphoserine.

Belongs to the protease inhibitor I35 (TIMP) family. Interacts with MMP1, MMP3, MMP10 and MMP13, but has only very low affinity for MMP14. Interacts with CD63; identified in a complex with CD63 and ITGB1. In terms of processing, the activity of TIMP1 is dependent on the presence of disulfide bonds. Post-translationally, N-glycosylated. In terms of tissue distribution, found in fetal and adult tissues. Highest levels are found in bone. Also found in lung, ovary and uterus.

It localises to the secreted. Metalloproteinase inhibitor that functions by forming one to one complexes with target metalloproteinases, such as collagenases, and irreversibly inactivates them by binding to their catalytic zinc cofactor. Acts on MMP1, MMP2, MMP3, MMP7, MMP8, MMP9, MMP10, MMP11, MMP12, MMP13 and MMP16. Does not act on MMP14. Also functions as a growth factor that regulates cell differentiation, migration and cell death and activates cellular signaling cascades via CD63 and ITGB1. Plays a role in integrin signaling. The protein is Metalloproteinase inhibitor 1 (Timp1) of Mus musculus (Mouse).